Consider the following 110-residue polypeptide: Large ribosomal subunit protein uL22 (110 aa).

This sequence belongs to the universal ribosomal protein uL22 family. As to quaternary structure, part of the 50S ribosomal subunit.

Its function is as follows. This protein binds specifically to 23S rRNA; its binding is stimulated by other ribosomal proteins, e.g. L4, L17, and L20. It is important during the early stages of 50S assembly. It makes multiple contacts with different domains of the 23S rRNA in the assembled 50S subunit and ribosome. The globular domain of the protein is located near the polypeptide exit tunnel on the outside of the subunit, while an extended beta-hairpin is found that lines the wall of the exit tunnel in the center of the 70S ribosome. The chain is Large ribosomal subunit protein uL22 from Nitrosomonas europaea (strain ATCC 19718 / CIP 103999 / KCTC 2705 / NBRC 14298).